The following is a 423-amino-acid chain: Imidazolonepropionase (423 aa).

Fe(3+)-binding residues include H91 and H93. H91 and H93 together coordinate Zn(2+). 4-imidazolone-5-propanoate is bound by residues R100, Y163, and H193. Position 163 (Y163) interacts with N-formimidoyl-L-glutamate. H257 is a binding site for Fe(3+). H257 contributes to the Zn(2+) binding site. Q260 lines the 4-imidazolone-5-propanoate pocket. D331 provides a ligand contact to Fe(3+). D331 is a Zn(2+) binding site. N-formimidoyl-L-glutamate contacts are provided by N333 and G335. T336 is a binding site for 4-imidazolone-5-propanoate.

The protein belongs to the metallo-dependent hydrolases superfamily. HutI family. The cofactor is Zn(2+). Fe(3+) is required as a cofactor.

It localises to the cytoplasm. The catalysed reaction is 4-imidazolone-5-propanoate + H2O = N-formimidoyl-L-glutamate. It participates in amino-acid degradation; L-histidine degradation into L-glutamate; N-formimidoyl-L-glutamate from L-histidine: step 3/3. Functionally, catalyzes the hydrolytic cleavage of the carbon-nitrogen bond in imidazolone-5-propanoate to yield N-formimidoyl-L-glutamate. It is the third step in the universal histidine degradation pathway. This is Imidazolonepropionase from Bdellovibrio bacteriovorus (strain ATCC 15356 / DSM 50701 / NCIMB 9529 / HD100).